Reading from the N-terminus, the 385-residue chain is Sesquiterpene alcohol synthase (385 aa).

Residues aspartate 123 and aspartate 127 each coordinate Mg(2+). The short motif at 123 to 127 (DDISD) is the DDXXD motif element.

It belongs to the terpene synthase family. Mg(2+) serves as cofactor. Specifically expressed in tissues lining the cuticle of the abdominal sternites of mature males.

It carries out the reaction (2E,6E)-farnesyl diphosphate + H2O = (1S,6S,7R)-sesquipiperitol + diphosphate. The protein operates within pheromone biosynthesis. Sesquiterpene alcohol synthase that catalyzes the formation of (1S,6S,7R)-sesquipiperitol, a terpene intermediate in murgantiol biosynthesis, a male-released aggregation pheromone. The sequence is that of Sesquiterpene alcohol synthase from Murgantia histrionica (Harlequin bug).